Here is a 119-residue protein sequence, read N- to C-terminus: Large ribosomal subunit protein bL17 (119 aa).

The protein belongs to the bacterial ribosomal protein bL17 family. Part of the 50S ribosomal subunit. Contacts protein L32.

This chain is Large ribosomal subunit protein bL17, found in Malacoplasma penetrans (strain HF-2) (Mycoplasma penetrans).